The sequence spans 264 residues: Phosphatidylglycerol--prolipoprotein diacylglyceryl transferase (264 aa).

4 consecutive transmembrane segments (helical) span residues 17 to 37 (LAIH…YLLG), 57 to 77 (LIFY…VLFY), 89 to 109 (IAFL…VILV), and 118 to 138 (GVSF…GLGA). Arg-140 is a binding site for a 1,2-diacyl-sn-glycero-3-phospho-(1'-sn-glycerol). A run of 3 helical transmembrane segments spans residues 173-193 (PSQL…LWWF), 201-221 (GQVS…VEFT), and 237-257 (MGQW…VLTA).

This sequence belongs to the Lgt family.

It is found in the cell inner membrane. The catalysed reaction is L-cysteinyl-[prolipoprotein] + a 1,2-diacyl-sn-glycero-3-phospho-(1'-sn-glycerol) = an S-1,2-diacyl-sn-glyceryl-L-cysteinyl-[prolipoprotein] + sn-glycerol 1-phosphate + H(+). It participates in protein modification; lipoprotein biosynthesis (diacylglyceryl transfer). In terms of biological role, catalyzes the transfer of the diacylglyceryl group from phosphatidylglycerol to the sulfhydryl group of the N-terminal cysteine of a prolipoprotein, the first step in the formation of mature lipoproteins. This Bordetella avium (strain 197N) protein is Phosphatidylglycerol--prolipoprotein diacylglyceryl transferase.